Here is a 283-residue protein sequence, read N- to C-terminus: Bifunctional protein FolD 1 (283 aa).

Residues glycine 166–serine 168 and isoleucine 232 each bind NADP(+).

Belongs to the tetrahydrofolate dehydrogenase/cyclohydrolase family. In terms of assembly, homodimer.

The enzyme catalyses (6R)-5,10-methylene-5,6,7,8-tetrahydrofolate + NADP(+) = (6R)-5,10-methenyltetrahydrofolate + NADPH. It catalyses the reaction (6R)-5,10-methenyltetrahydrofolate + H2O = (6R)-10-formyltetrahydrofolate + H(+). Its pathway is one-carbon metabolism; tetrahydrofolate interconversion. Functionally, catalyzes the oxidation of 5,10-methylenetetrahydrofolate to 5,10-methenyltetrahydrofolate and then the hydrolysis of 5,10-methenyltetrahydrofolate to 10-formyltetrahydrofolate. The sequence is that of Bifunctional protein FolD 1 from Lactobacillus johnsonii (strain CNCM I-12250 / La1 / NCC 533).